The chain runs to 369 residues: Glutamate 5-kinase (369 aa).

K14 contributes to the ATP binding site. Residues S56, D143, and N155 each coordinate substrate. Residues 175-176 (SD) and 215-221 (TGGMASK) each bind ATP. The PUA domain occupies 277–351 (AGKIRLDQGA…GMKTQELPDD (75 aa)).

The protein belongs to the glutamate 5-kinase family.

The protein resides in the cytoplasm. It carries out the reaction L-glutamate + ATP = L-glutamyl 5-phosphate + ADP. Its pathway is amino-acid biosynthesis; L-proline biosynthesis; L-glutamate 5-semialdehyde from L-glutamate: step 1/2. In terms of biological role, catalyzes the transfer of a phosphate group to glutamate to form L-glutamate 5-phosphate. In Corynebacterium efficiens (strain DSM 44549 / YS-314 / AJ 12310 / JCM 11189 / NBRC 100395), this protein is Glutamate 5-kinase.